Here is a 420-residue protein sequence, read N- to C-terminus: Dynein axonemal assembly factor 4 (420 aa).

The region spanning Val3–Ser87 is the CS domain. Positions Glu7–Ser103 are mediates interaction with ESR1 and STUB1. Positions Glu164–Ala192 are enriched in basic and acidic residues. A disordered region spans residues Glu164–Arg212. 3 TPR repeats span residues Pro288–Ile321, Pro322–Pro355, and Met364–Asn397.

In terms of assembly, interacts with ZMYND10. Interacts with ESR1 and ESR2. Interacts with STUB1. Interacts with DNAAF2. Interacts with CCT3, CCT4, CCT5 and CCT8. Interacts with DNAAF6/PIH1D3.

It is found in the nucleus. The protein resides in the cytoplasm. The protein localises to the dynein axonemal particle. Its subcellular location is the cell projection. It localises to the neuron projection. Functionally, involved in neuronal migration during development of the cerebral neocortex. May regulate the stability and proteasomal degradation of the estrogen receptors that play an important role in neuronal differentiation, survival and plasticity. Axonemal dynein assembly factor required for ciliary motility. This Mus musculus (Mouse) protein is Dynein axonemal assembly factor 4.